Here is a 178-residue protein sequence, read N- to C-terminus: Adenine phosphoribosyltransferase (178 aa).

It belongs to the purine/pyrimidine phosphoribosyltransferase family. In terms of assembly, homodimer.

It is found in the cytoplasm. The catalysed reaction is AMP + diphosphate = 5-phospho-alpha-D-ribose 1-diphosphate + adenine. It participates in purine metabolism; AMP biosynthesis via salvage pathway; AMP from adenine: step 1/1. Catalyzes a salvage reaction resulting in the formation of AMP, that is energically less costly than de novo synthesis. The protein is Adenine phosphoribosyltransferase of Pseudoalteromonas atlantica (strain T6c / ATCC BAA-1087).